Here is a 199-residue protein sequence, read N- to C-terminus: NADH-quinone oxidoreductase subunit C (199 aa).

The protein belongs to the complex I 30 kDa subunit family. As to quaternary structure, NDH-1 is composed of 14 different subunits. Subunits NuoB, C, D, E, F, and G constitute the peripheral sector of the complex.

The protein resides in the cell inner membrane. The catalysed reaction is a quinone + NADH + 5 H(+)(in) = a quinol + NAD(+) + 4 H(+)(out). Functionally, NDH-1 shuttles electrons from NADH, via FMN and iron-sulfur (Fe-S) centers, to quinones in the respiratory chain. The immediate electron acceptor for the enzyme in this species is believed to be ubiquinone. Couples the redox reaction to proton translocation (for every two electrons transferred, four hydrogen ions are translocated across the cytoplasmic membrane), and thus conserves the redox energy in a proton gradient. The polypeptide is NADH-quinone oxidoreductase subunit C (Rhodopseudomonas palustris (strain BisB18)).